Reading from the N-terminus, the 92-residue chain is Putative pterin-4-alpha-carbinolamine dehydratase 2 (92 aa).

Belongs to the pterin-4-alpha-carbinolamine dehydratase family.

The enzyme catalyses (4aS,6R)-4a-hydroxy-L-erythro-5,6,7,8-tetrahydrobiopterin = (6R)-L-erythro-6,7-dihydrobiopterin + H2O. The polypeptide is Putative pterin-4-alpha-carbinolamine dehydratase 2 (Gloeobacter violaceus (strain ATCC 29082 / PCC 7421)).